The sequence spans 205 residues: Outer-membrane lipoprotein carrier protein (205 aa).

The signal sequence occupies residues 1-21 (MKKIVLLVTLVFSINYSFANA).

This sequence belongs to the LolA family. Monomer.

The protein localises to the periplasm. Participates in the translocation of lipoproteins from the inner membrane to the outer membrane. Only forms a complex with a lipoprotein if the residue after the N-terminal Cys is not an aspartate (The Asp acts as a targeting signal to indicate that the lipoprotein should stay in the inner membrane). The chain is Outer-membrane lipoprotein carrier protein from Francisella philomiragia subsp. philomiragia (strain ATCC 25017 / CCUG 19701 / FSC 153 / O#319-036).